Here is a 256-residue protein sequence, read N- to C-terminus: Probable transcriptional regulatory protein cce_0894 (256 aa).

This sequence belongs to the TACO1 family.

The protein resides in the cytoplasm. The protein is Probable transcriptional regulatory protein cce_0894 of Crocosphaera subtropica (strain ATCC 51142 / BH68) (Cyanothece sp. (strain ATCC 51142)).